Here is a 420-residue protein sequence, read N- to C-terminus: Glutamate dehydrogenase (420 aa).

K105 is a catalytic residue. Position 220–226 (G220–Y226) interacts with NAD(+).

This sequence belongs to the Glu/Leu/Phe/Val dehydrogenases family. Homohexamer.

The protein resides in the cytoplasm. The catalysed reaction is L-glutamate + NAD(+) + H2O = 2-oxoglutarate + NH4(+) + NADH + H(+). The enzyme catalyses L-glutamate + NADP(+) + H2O = 2-oxoglutarate + NH4(+) + NADPH + H(+). The sequence is that of Glutamate dehydrogenase (gdhA) from Pyrococcus abyssi (strain GE5 / Orsay).